Consider the following 466-residue polypeptide: Voltage-gated potassium channel regulatory subunit KCNG2 (466 aa).

The Cytoplasmic segment spans residues 1–174 (MEPWPCSPGG…DVVDNPHSGL (174 aa)). The tract at residues 131–155 (AEARAGPTERGAQGSPARALGPRGR) is disordered. Residues 175–196 (AGKLFACVSVSFVAVTAVGLCL) traverse the membrane as a helical segment. The Extracellular portion of the chain corresponds to 197–217 (STMPDIRAEEERGECSPKCRS). The helical transmembrane segment at 218-239 (LFVLETVCVAWFSFEFLLRSLQ) threads the bilayer. The Cytoplasmic portion of the chain corresponds to 240 to 250 (AESKCAFLRAP). Residues 251 to 271 (LNIIDILALLPFYVSLLLGLA) traverse the membrane as a helical segment. At 272–283 (AGPGGTKLLERA) the chain is on the extracellular side. A helical; Voltage-sensor transmembrane segment spans residues 284–304 (GLVLRLLRALRVLYVMRLARH). The Cytoplasmic segment spans residues 305–319 (SLGLRSLGLTMRRCA). Residues 320–341 (REFGLLLLFLCVAMALFAPLVH) form a helical membrane-spanning segment. The Extracellular portion of the chain corresponds to 342 to 356 (LAERELGARRDFSSV). Positions 357 to 368 (PASYWWAVISMT) form an intramembrane region, helical. The Selectivity filter signature appears at 369 to 374 (TVGYGD). The stretch at 369–376 (TVGYGDMV) is an intramembrane region. At 377-383 (PRSLPGQ) the chain is on the extracellular side. A helical membrane pass occupies residues 384–412 (VVALSSILSGILLMAFPVTSIFHTFSRSY). Over 413-466 (SELKEQQQRAASPEPALQEDSTHSATATEDSSQGPDSAGLADDSADALWVRAGR) the chain is Cytoplasmic. Residues 416-466 (KEQQQRAASPEPALQEDSTHSATATEDSSQGPDSAGLADDSADALWVRAGR) form a disordered region. Residues 435–447 (HSATATEDSSQGP) show a composition bias toward polar residues. A compositionally biased stretch (low complexity) spans 448–460 (DSAGLADDSADAL).

The protein belongs to the potassium channel family. G (TC 1.A.1.2) subfamily. Kv6.2/KCNG2 sub-subfamily. In terms of assembly, heterodimer with KCNB1. Highly expressed in heart, liver, skeletal muscle, kidney and pancreas. Detected at low levels in brain, lung and placenta.

It localises to the cell membrane. In terms of biological role, regulatory alpha-subunit of the voltage-gated potassium (Kv) channel which, when coassembled with KCNB1, can modulate the kinetics and conductance-voltage relationship. Modulates channel activity by shifting the threshold and the half-maximal activation to more negative values. Potassium channel subunit that does not form functional channels by itself. The chain is Voltage-gated potassium channel regulatory subunit KCNG2 from Homo sapiens (Human).